Here is a 346-residue protein sequence, read N- to C-terminus: tRNA N6-adenosine threonylcarbamoyltransferase (346 aa).

The Fe cation site is built by H111 and H115. Residues L134–G138, D167, G180, and N279 contribute to the substrate site. D307 contributes to the Fe cation binding site.

Belongs to the KAE1 / TsaD family. Fe(2+) is required as a cofactor.

It localises to the cytoplasm. It catalyses the reaction L-threonylcarbamoyladenylate + adenosine(37) in tRNA = N(6)-L-threonylcarbamoyladenosine(37) in tRNA + AMP + H(+). In terms of biological role, required for the formation of a threonylcarbamoyl group on adenosine at position 37 (t(6)A37) in tRNAs that read codons beginning with adenine. Is involved in the transfer of the threonylcarbamoyl moiety of threonylcarbamoyl-AMP (TC-AMP) to the N6 group of A37, together with TsaE and TsaB. TsaD likely plays a direct catalytic role in this reaction. The polypeptide is tRNA N6-adenosine threonylcarbamoyltransferase (Burkholderia lata (strain ATCC 17760 / DSM 23089 / LMG 22485 / NCIMB 9086 / R18194 / 383)).